Here is a 256-residue protein sequence, read N- to C-terminus: Low molecular mass lipoprotein 3 (256 aa).

An N-terminal signal peptide occupies residues 1 to 17; the sequence is MKPAIVILCLFVASLYA.

Belongs to the 30 kDa lipoprotein family. In terms of tissue distribution, detected in larval hemolymph (at protein level).

It is found in the secreted. The protein is Low molecular mass lipoprotein 3 of Bombyx mori (Silk moth).